Consider the following 374-residue polypeptide: uncharacterized protein (374 aa).

This sequence belongs to the mimivirus R640 family.

The protein localises to the virion. This is an uncharacterized protein from Acanthamoeba polyphaga (Amoeba).